The following is a 911-amino-acid chain: Valine--tRNA ligase (911 aa).

The short motif at 57–67 is the 'HIGH' region element; it reads PTVSGSLHVGH. Residues 599–603 carry the 'KMSKS' region motif; that stretch reads KMSKS. K602 is an ATP binding site. The segment at 882 to 911 is disordered; it reads EESAAEGTPETEVAVEASELGEPPAKKPKH.

The protein belongs to the class-I aminoacyl-tRNA synthetase family. ValS type 2 subfamily. In terms of assembly, monomer.

It localises to the cytoplasm. It catalyses the reaction tRNA(Val) + L-valine + ATP = L-valyl-tRNA(Val) + AMP + diphosphate. Functionally, catalyzes the attachment of valine to tRNA(Val). As ValRS can inadvertently accommodate and process structurally similar amino acids such as threonine, to avoid such errors, it has a 'posttransfer' editing activity that hydrolyzes mischarged Thr-tRNA(Val) in a tRNA-dependent manner. The sequence is that of Valine--tRNA ligase from Bifidobacterium longum (strain NCC 2705).